A 397-amino-acid polypeptide reads, in one-letter code: Elongation factor Tu (397 aa).

One can recognise a tr-type G domain in the interval 10 to 206; the sequence is KPHVNIGTIG…AVDSYIPTPE (197 aa). The G1 stretch occupies residues 19-26; it reads GHVDHGKT. Residue 19–26 coordinates GTP; that stretch reads GHVDHGKT. Thr26 is a Mg(2+) binding site. A G2 region spans residues 60–64; it reads GITIN. The segment at 81 to 84 is G3; sequence DCPG. Residues 81–85 and 136–139 contribute to the GTP site; these read DCPGH and NKAD. The G4 stretch occupies residues 136-139; sequence NKAD. Residues 174–176 form a G5 region; that stretch reads SAL.

This sequence belongs to the TRAFAC class translation factor GTPase superfamily. Classic translation factor GTPase family. EF-Tu/EF-1A subfamily. In terms of assembly, monomer.

It is found in the cytoplasm. It catalyses the reaction GTP + H2O = GDP + phosphate + H(+). Functionally, GTP hydrolase that promotes the GTP-dependent binding of aminoacyl-tRNA to the A-site of ribosomes during protein biosynthesis. This chain is Elongation factor Tu, found in Clostridium perfringens (strain ATCC 13124 / DSM 756 / JCM 1290 / NCIMB 6125 / NCTC 8237 / Type A).